We begin with the raw amino-acid sequence, 196 residues long: Protein GrpE (196 aa).

Residues 1–41 (MSSKEQKTPEGQAPEEIITEQHDDVEAVEPEVSAEQVDPRD) are disordered.

This sequence belongs to the GrpE family. In terms of assembly, homodimer.

The protein localises to the cytoplasm. Functionally, participates actively in the response to hyperosmotic and heat shock by preventing the aggregation of stress-denatured proteins, in association with DnaK and GrpE. It is the nucleotide exchange factor for DnaK and may function as a thermosensor. Unfolded proteins bind initially to DnaJ; upon interaction with the DnaJ-bound protein, DnaK hydrolyzes its bound ATP, resulting in the formation of a stable complex. GrpE releases ADP from DnaK; ATP binding to DnaK triggers the release of the substrate protein, thus completing the reaction cycle. Several rounds of ATP-dependent interactions between DnaJ, DnaK and GrpE are required for fully efficient folding. In Klebsiella pneumoniae (strain 342), this protein is Protein GrpE.